The chain runs to 362 residues: Carbamoyl phosphate synthase small chain (362 aa).

The segment at 1-169 (MGKRLLILED…TKTAYPAPGV (169 aa)) is CPSase. L-glutamine contacts are provided by Ser-46, Gly-220, and Gly-222. In terms of domain architecture, Glutamine amidotransferase type-1 spans 172–358 (NIVLVDFGLK…LELIDAFQLE (187 aa)). Cys-247 acts as the Nucleophile in catalysis. Met-248, Gln-251, Asn-289, Gly-291, and Tyr-292 together coordinate L-glutamine. Active-site residues include His-331 and Asp-333.

Belongs to the CarA family. Composed of two chains; the small (or glutamine) chain promotes the hydrolysis of glutamine to ammonia, which is used by the large (or ammonia) chain to synthesize carbamoyl phosphate. Tetramer of heterodimers (alpha,beta)4.

It carries out the reaction hydrogencarbonate + L-glutamine + 2 ATP + H2O = carbamoyl phosphate + L-glutamate + 2 ADP + phosphate + 2 H(+). The enzyme catalyses L-glutamine + H2O = L-glutamate + NH4(+). Its pathway is amino-acid biosynthesis; L-arginine biosynthesis; carbamoyl phosphate from bicarbonate: step 1/1. It functions in the pathway pyrimidine metabolism; UMP biosynthesis via de novo pathway; (S)-dihydroorotate from bicarbonate: step 1/3. Small subunit of the glutamine-dependent carbamoyl phosphate synthetase (CPSase). CPSase catalyzes the formation of carbamoyl phosphate from the ammonia moiety of glutamine, carbonate, and phosphate donated by ATP, constituting the first step of 2 biosynthetic pathways, one leading to arginine and/or urea and the other to pyrimidine nucleotides. The small subunit (glutamine amidotransferase) binds and cleaves glutamine to supply the large subunit with the substrate ammonia. This Streptococcus mutans serotype c (strain ATCC 700610 / UA159) protein is Carbamoyl phosphate synthase small chain.